We begin with the raw amino-acid sequence, 451 residues long: Chromosomal replication initiator protein DnaA (451 aa).

A domain I, interacts with DnaA modulators region spans residues 1–71; that stretch reads MSEKEIWDKV…QAIIYDVIGY (71 aa). Positions 71–112 are domain II; the sequence is YEVKPHFISEDELASYNNVNTQEVQEPQVQHSSIDDKTWGKE. The domain III, AAA+ region stretch occupies residues 113–329; it reads QFNMHNTFDT…GALTRLLAYS (217 aa). Gly-157, Gly-159, Lys-160, and Thr-161 together coordinate ATP. Positions 330-451 are domain IV, binds dsDNA; sequence KLQGKPITTE…ENLEKEIRNQ (122 aa).

Belongs to the DnaA family. Oligomerizes as a right-handed, spiral filament on DNA at oriC.

Its subcellular location is the cytoplasm. Functionally, plays an essential role in the initiation and regulation of chromosomal replication. ATP-DnaA binds to the origin of replication (oriC) to initiate formation of the DNA replication initiation complex once per cell cycle. Binds the DnaA box (a 9 base pair repeat at the origin) and separates the double-stranded (ds)DNA. Forms a right-handed helical filament on oriC DNA; dsDNA binds to the exterior of the filament while single-stranded (ss)DNA is stabiized in the filament's interior. The ATP-DnaA-oriC complex binds and stabilizes one strand of the AT-rich DNA unwinding element (DUE), permitting loading of DNA polymerase. After initiation quickly degrades to an ADP-DnaA complex that is not apt for DNA replication. Binds acidic phospholipids. The polypeptide is Chromosomal replication initiator protein DnaA (Staphylococcus epidermidis (strain ATCC 35984 / DSM 28319 / BCRC 17069 / CCUG 31568 / BM 3577 / RP62A)).